The primary structure comprises 86 residues: MSALDKTMYFDFGQNEKKDVHQTLETVYNSLEEKGYNPINQIVGYLLSGDPAYIPRLNDARNLIRKHERDEIIEELVRAYLDKGEK.

The protein belongs to the UPF0297 family.

The chain is UPF0297 protein LSL_1110 from Ligilactobacillus salivarius (strain UCC118) (Lactobacillus salivarius).